The sequence spans 272 residues: Centromere protein V-like protein 3 (272 aa).

Residues 1–17 show a composition bias toward basic residues; sequence MGRVRNRATAQRRRRKR. Disordered regions lie at residues 1–23 and 65–95; these read MGRV…DPPA and RRAR…KELD. The segment covering 77-88 has biased composition (pro residues); that stretch reads PSAPLPDPPAPA. One can recognise a CENP-V/GFA domain in the interval 133–246; sequence HTGGCHCGAV…EEVGGGDPGE (114 aa). Zn(2+) is bound by residues cysteine 137, cysteine 139, cysteine 157, cysteine 159, cysteine 162, cysteine 201, and cysteine 204. The disordered stretch occupies residues 240–272; sequence GGGDPGEEAAEEHKAIHKTSSQSAPACPREQEQ.

Belongs to the Gfa family. Requires Zn(2+) as cofactor.

In Homo sapiens (Human), this protein is Centromere protein V-like protein 3.